The chain runs to 256 residues: Cilia- and flagella-associated protein 410 (256 aa).

LRR repeat units follow at residues 19–40 (SVRK…QEMP), 41–62 (SLEV…SRCQ), and 63–84 (RLSE…FYLK). Residues 97-137 (NPCCGTSPHRYRMTVLRTLPRLQKLDNQAVTEEELSRALSE) form the LRRCT domain. Disordered stretches follow at residues 129–156 (EELS…GGPK) and 168–212 (AETG…SSHR). 2 positions are modified to phosphoserine: Ser-136 and Ser-177.

In terms of assembly, found in a complex with CFAP410, NEK1 and SPATA7. Interacts with NEK1. In terms of tissue distribution, widely expressed. Expressed in the retina.

Its subcellular location is the mitochondrion. It is found in the cytoplasm. The protein localises to the cytoskeleton. The protein resides in the cilium basal body. It localises to the cell projection. Its subcellular location is the cilium. It is found in the photoreceptor outer segment. Its function is as follows. Plays a role in cilia formation and/or maintenance. Plays a role in the regulation of cell morphology and cytoskeletal organization. Involved in DNA damage repair. This chain is Cilia- and flagella-associated protein 410, found in Homo sapiens (Human).